Consider the following 299-residue polypeptide: Ribonuclease H2 subunit A (299 aa).

Residue M1 is modified to N-acetylmethionine. The 223-residue stretch at 28–250 (PCVLGVDEAG…AQTILEKEAE (223 aa)) folds into the RNase H type-2 domain. 3 residues coordinate a divalent metal cation: D34, E35, and D141. Residues T204 and T216 each carry the phosphothreonine modification. Residues S257 and S277 each carry the phosphoserine modification.

Belongs to the RNase HII family. Eukaryotic subfamily. The RNase H2 complex is a heterotrimer composed of the catalytic subunit RNASEH2A and the non-catalytic subunits RNASEH2B and RNASEH2C. Mn(2+) serves as cofactor. Mg(2+) is required as a cofactor.

It localises to the nucleus. It carries out the reaction Endonucleolytic cleavage to 5'-phosphomonoester.. Functionally, catalytic subunit of RNase HII, an endonuclease that specifically degrades the RNA of RNA:DNA hybrids. Participates in DNA replication, possibly by mediating the removal of lagging-strand Okazaki fragment RNA primers during DNA replication. Mediates the excision of single ribonucleotides from DNA:RNA duplexes. The sequence is that of Ribonuclease H2 subunit A (RNASEH2A) from Homo sapiens (Human).